A 503-amino-acid chain; its full sequence is 3-octaprenyl-4-hydroxybenzoate carboxy-lyase (503 aa).

N176 lines the Mn(2+) pocket. Prenylated FMN-binding positions include 179–181, 193–195, and 198–199; these read IYR, RWL, and RG. A Mn(2+)-binding site is contributed by E242. D303 functions as the Proton donor in the catalytic mechanism.

Belongs to the UbiD family. In terms of assembly, homohexamer. The cofactor is prenylated FMN. Requires Mn(2+) as cofactor.

The protein localises to the cell membrane. The enzyme catalyses a 4-hydroxy-3-(all-trans-polyprenyl)benzoate + H(+) = a 2-(all-trans-polyprenyl)phenol + CO2. It functions in the pathway cofactor biosynthesis; ubiquinone biosynthesis. Its function is as follows. Catalyzes the decarboxylation of 3-octaprenyl-4-hydroxy benzoate to 2-octaprenylphenol, an intermediate step in ubiquinone biosynthesis. The protein is 3-octaprenyl-4-hydroxybenzoate carboxy-lyase of Ralstonia nicotianae (strain ATCC BAA-1114 / GMI1000) (Ralstonia solanacearum).